The following is a 181-amino-acid chain: Small ribosomal subunit protein uS4 (181 aa).

The region spanning 104-172 (RRLQTIVYKK…SRPPVMSQQE (69 aa)) is the S4 RNA-binding domain.

Belongs to the universal ribosomal protein uS4 family. Part of the 30S ribosomal subunit. Contacts protein S5. The interaction surface between S4 and S5 is involved in control of translational fidelity.

Its function is as follows. One of the primary rRNA binding proteins, it binds directly to 16S rRNA where it nucleates assembly of the body of the 30S subunit. With S5 and S12 plays an important role in translational accuracy. The polypeptide is Small ribosomal subunit protein uS4 (Saccharolobus solfataricus (strain ATCC 35092 / DSM 1617 / JCM 11322 / P2) (Sulfolobus solfataricus)).